Consider the following 286-residue polypeptide: MVHPFNRIFGKSDKENIDTDEVEYSTDEVIQIKVDNIHPNRYQPRTIFQEEKIKELAQTIHTHGMIQPIVVRKLEDEDTYELIAGERRWRAVQHLGWEQVSAIIRDMTDTETASVALIENLQREELTVIEEAIAYSKLLELHSLTQEALAQRLGKNQSTVANKLRLLKLPEEVQTALLDKAISERHARALIKLKQEDQQIAVLHEILEKGLNVKQTEDRIAQINEPKEKKKPKPKFKGVNKDIRIAMNTIRQSLNMVSDTGVEVESDEKELDDYYQITIKIPKKNQ.

A DNA-binding region (H-T-H motif) is located at residues 147-166; sequence EALAQRLGKNQSTVANKLRL.

It belongs to the ParB family.

It is found in the cytoplasm. The protein localises to the nucleoid. Effects nucleoid occlusion by binding relatively nonspecifically to DNA and preventing the assembly of the division machinery in the vicinity of the nucleoid, especially under conditions that disturb the cell cycle. It helps to coordinate cell division and chromosome segregation by preventing the formation of the Z ring through the nucleoid, which would cause chromosome breakage. The chain is Nucleoid occlusion protein from Oceanobacillus iheyensis (strain DSM 14371 / CIP 107618 / JCM 11309 / KCTC 3954 / HTE831).